A 592-amino-acid chain; its full sequence is Aspartate--tRNA ligase (592 aa).

Glu173 provides a ligand contact to L-aspartate. The tract at residues 197 to 200 is aspartate; it reads QLFK. Arg219 lines the L-aspartate pocket. ATP contacts are provided by residues 219–221 and Gln228; that span reads RDE. His448 is a binding site for L-aspartate. Position 482 (Glu482) interacts with ATP. Position 489 (Arg489) interacts with L-aspartate. 534–537 provides a ligand contact to ATP; the sequence is GLDR.

This sequence belongs to the class-II aminoacyl-tRNA synthetase family. Type 1 subfamily. Homodimer.

The protein resides in the cytoplasm. The catalysed reaction is tRNA(Asp) + L-aspartate + ATP = L-aspartyl-tRNA(Asp) + AMP + diphosphate. Catalyzes the attachment of L-aspartate to tRNA(Asp) in a two-step reaction: L-aspartate is first activated by ATP to form Asp-AMP and then transferred to the acceptor end of tRNA(Asp). This is Aspartate--tRNA ligase from Shewanella putrefaciens (strain CN-32 / ATCC BAA-453).